A 146-amino-acid polypeptide reads, in one-letter code: uncharacterized protein (146 aa).

The chain crosses the membrane as a helical span at residues 7 to 27; sequence FVLSITIVLVILIIIAFIWYN.

It belongs to the asfivirus E146L family.

Its subcellular location is the host membrane. It is found in the virion. This is an uncharacterized protein from Ornithodoros (relapsing fever ticks).